The chain runs to 414 residues: Serine hydroxymethyltransferase (414 aa).

(6S)-5,6,7,8-tetrahydrofolate contacts are provided by residues L116 and 120–122 (GHL). K224 is subject to N6-(pyridoxal phosphate)lysine. Residues E240 and 348 to 350 (SPF) contribute to the (6S)-5,6,7,8-tetrahydrofolate site.

Belongs to the SHMT family. Homodimer. Requires pyridoxal 5'-phosphate as cofactor.

It localises to the cytoplasm. The enzyme catalyses (6R)-5,10-methylene-5,6,7,8-tetrahydrofolate + glycine + H2O = (6S)-5,6,7,8-tetrahydrofolate + L-serine. The protein operates within one-carbon metabolism; tetrahydrofolate interconversion. Its pathway is amino-acid biosynthesis; glycine biosynthesis; glycine from L-serine: step 1/1. Its function is as follows. Catalyzes the reversible interconversion of serine and glycine with tetrahydrofolate (THF) serving as the one-carbon carrier. This reaction serves as the major source of one-carbon groups required for the biosynthesis of purines, thymidylate, methionine, and other important biomolecules. Also exhibits THF-independent aldolase activity toward beta-hydroxyamino acids, producing glycine and aldehydes, via a retro-aldol mechanism. This chain is Serine hydroxymethyltransferase, found in Campylobacter jejuni subsp. jejuni serotype O:2 (strain ATCC 700819 / NCTC 11168).